The chain runs to 337 residues: Fructose-1,6-bisphosphatase class 1 (337 aa).

4 residues coordinate Mg(2+): Glu-94, Asp-116, Leu-118, and Asp-119. Substrate contacts are provided by residues 119–122, Asn-210, and Lys-276; that span reads DGSS. Mg(2+) is bound at residue Glu-282.

Belongs to the FBPase class 1 family. As to quaternary structure, homotetramer. Mg(2+) is required as a cofactor.

Its subcellular location is the cytoplasm. It catalyses the reaction beta-D-fructose 1,6-bisphosphate + H2O = beta-D-fructose 6-phosphate + phosphate. The protein operates within carbohydrate biosynthesis; gluconeogenesis. This is Fructose-1,6-bisphosphatase class 1 from Burkholderia cenocepacia (strain HI2424).